A 374-amino-acid chain; its full sequence is Protein-glutamate methylesterase/protein-glutamine glutaminase 1 (374 aa).

The Response regulatory domain maps to 4 to 121 (KVLVVDDSSF…ATNKDEAILL (118 aa)). Residue D55 is modified to 4-aspartylphosphate. The interval 141 to 170 (PSVAPVTPRPTTGSAVGNATTPVQSASAPV) is disordered. Polar residues predominate over residues 149–167 (RPTTGSAVGNATTPVQSAS). A CheB-type methylesterase domain is found at 174–374 (PLSSIRASGK…ESILKESARG (201 aa)). Active-site residues include S193, H220, and D316.

The protein belongs to the CheB family. Post-translationally, phosphorylated by CheA. Phosphorylation of the N-terminal regulatory domain activates the methylesterase activity.

The protein resides in the cytoplasm. It carries out the reaction [protein]-L-glutamate 5-O-methyl ester + H2O = L-glutamyl-[protein] + methanol + H(+). The catalysed reaction is L-glutaminyl-[protein] + H2O = L-glutamyl-[protein] + NH4(+). Involved in chemotaxis. Part of a chemotaxis signal transduction system that modulates chemotaxis in response to various stimuli. Catalyzes the demethylation of specific methylglutamate residues introduced into the chemoreceptors (methyl-accepting chemotaxis proteins or MCP) by CheR. Also mediates the irreversible deamidation of specific glutamine residues to glutamic acid. The polypeptide is Protein-glutamate methylesterase/protein-glutamine glutaminase 1 (Shewanella oneidensis (strain ATCC 700550 / JCM 31522 / CIP 106686 / LMG 19005 / NCIMB 14063 / MR-1)).